Here is a 423-residue protein sequence, read N- to C-terminus: Histidine--tRNA ligase (423 aa).

This sequence belongs to the class-II aminoacyl-tRNA synthetase family. Homodimer.

The protein localises to the cytoplasm. The catalysed reaction is tRNA(His) + L-histidine + ATP = L-histidyl-tRNA(His) + AMP + diphosphate + H(+). The protein is Histidine--tRNA ligase of Actinobacillus succinogenes (strain ATCC 55618 / DSM 22257 / CCUG 43843 / 130Z).